Here is a 412-residue protein sequence, read N- to C-terminus: MNAEIIAVGTELLLGQIANTNAQFLSEKLASIGINVYYHTVVGDNNKRLQQAIEVAEGRADMLIFTGGLGPTKDDLTKETIASSLAEELVYDEKALASISDYFKRTGREFTENNKKQALVLDGATVFANDHGMAPGMGLNKNGKVYILLPGPPKEMKPMYVSYVEPFLRNFTTGENIYSRVLRFFGIGESQLEVKVQDLIDGQTNPTIAPLANDGEVTLRLTAKHQNVDEAEKLIQHVEDLILERVGEFFYGYDQEFLHDKAIELLKKKGLTLSCAESLTGGLFGNQVTESAGVSSVFKGGVICYHNDVKQHVLHVPEEVLFTDGAVSKECARYLAENVKELLEADIGISFTGVAGPDASEHKEPGTVFVGLAIKDEPTVVFPLNLSGSRQQIRERSAKYGFYHLYKKLEEI.

This sequence belongs to the CinA family.

The polypeptide is Putative competence-damage inducible protein (Bacillus thuringiensis (strain Al Hakam)).